A 400-amino-acid polypeptide reads, in one-letter code: Involucrin (400 aa).

Disordered regions lie at residues 1 to 196 (MSQQ…HLKQ), 273 to 312 (KEEV…EQQL), and 333 to 381 (KRDE…KGEV). Composition is skewed to low complexity over residues 78–159 (QQQQ…QQHQ), 169–186 (EQQQ…GQQE), and 279–292 (EQQQ…QQHQ). A compositionally biased stretch (basic and acidic residues) spans 333 to 344 (KRDEQLGKKEEQ). The segment covering 346 to 358 (LEPSEQQEGLLEQ) has biased composition (low complexity).

This sequence belongs to the involucrin family. As to quaternary structure, directly or indirectly cross-linked to cornifelin (CNFN). Post-translationally, substrate of transglutaminase. Specific glutamines or lysines are cross-linked to keratins, desmoplakin and to inter involucrin molecules. As to expression, keratinocytes of epidermis and other stratified squamous epithelia.

It is found in the cytoplasm. Functionally, part of the insoluble cornified cell envelope (CE) of stratified squamous epithelia. This Tupaia glis (Common tree shrew) protein is Involucrin (IVL).